Consider the following 207-residue polypeptide: Large ribosomal subunit protein bL20 (207 aa).

Residues 117-161 form a disordered region; it reads QETQPQPEEKTSLQPEKVLSTELSEEKSDDTLETKPQTTQVKAKK. A compositionally biased stretch (basic and acidic residues) spans 140–149; sequence SEEKSDDTLE.

This sequence belongs to the bacterial ribosomal protein bL20 family.

Binds directly to 23S ribosomal RNA and is necessary for the in vitro assembly process of the 50S ribosomal subunit. It is not involved in the protein synthesizing functions of that subunit. In Onion yellows phytoplasma (strain OY-M), this protein is Large ribosomal subunit protein bL20.